Here is a 263-residue protein sequence, read N- to C-terminus: MDKRWSLQGMTALVTGAASGIGYAIVEELAGFGARIHVCDISETLLNQSLREWEKKGFQVSGSVCDVTSRPEREKLMQTVSSLFDGKLNILVNNVGVLRAKPTTEYVADDFTFHISTNLEAAYHFCQLSHPLLKTSGYGSIVFLSSVSGVVSITDCGSLYGLTKGALNQLARNLACEWAKDGIRANAVAPNVVKTAQSQFFLQDVSKKEGLFSRTPLGRSGEPNEVASLVVFLCLPAASYITGQTICIDGGLTVYGFSSQPQA.

Position 13 to 37 (13 to 37 (LVTGAASGIGYAIVEELAGFGARIH)) interacts with NADP(+). Ser146 provides a ligand contact to substrate. Tyr160 acts as the Proton acceptor in catalysis.

This sequence belongs to the short-chain dehydrogenases/reductases (SDR) family. SDR65C subfamily.

This is Tropinone reductase homolog At2g29300 from Arabidopsis thaliana (Mouse-ear cress).